We begin with the raw amino-acid sequence, 391 residues long: Terminal nucleotidyltransferase 5C (391 aa).

It belongs to the TENT family. In terms of assembly, interacts with BCCIP and PABPC1; the interaction has no effect on TENT5C poly(A) polymerase function. Interacts with PLK4; this interaction leads to the TENT5C recruitment into the centrosome.

The protein resides in the nucleus. It localises to the cytoplasm. Its subcellular location is the cytoskeleton. The protein localises to the microtubule organizing center. It is found in the centrosome. It catalyses the reaction RNA(n) + ATP = RNA(n)-3'-adenine ribonucleotide + diphosphate. Catalyzes the transfer of one adenosine molecule from an ATP to an mRNA poly(A) tail bearing a 3'-OH terminal group and enhances mRNA stability and gene expression. Can also elongate RNA oligos ending with uridine molecule, provided that the sequence is adenosine-rich. Mainly targets mRNAs encoding endoplasmic reticulum-targeted protein. Its function is as follows. (Microbial infection) Seems to enhance replication of some viruses, including yellow fever virus, in response to type I interferon. This Homo sapiens (Human) protein is Terminal nucleotidyltransferase 5C.